Consider the following 246-residue polypeptide: Putative carboxymethylenebutenolidase (246 aa).

Catalysis depends on residues cysteine 127, aspartate 183, and histidine 215.

Belongs to the dienelactone hydrolase family.

The enzyme catalyses 2-(5-oxo-2,5-dihydrofuran-2-ylidene)acetate + H2O = 4-oxohex-2-enedioate + H(+). The sequence is that of Putative carboxymethylenebutenolidase from Synechocystis sp. (strain ATCC 27184 / PCC 6803 / Kazusa).